Reading from the N-terminus, the 1004-residue chain is 2-oxoglutarate dehydrogenase E1 component (1004 aa).

Belongs to the alpha-ketoglutarate dehydrogenase family. As to quaternary structure, homodimer. Part of the 2-oxoglutarate dehydrogenase (OGDH) complex composed of E1 (2-oxoglutarate dehydrogenase), E2 (dihydrolipoamide succinyltransferase) and E3 (dihydrolipoamide dehydrogenase); the complex contains multiple copies of the three enzymatic components (E1, E2 and E3). Thiamine diphosphate serves as cofactor.

The catalysed reaction is N(6)-[(R)-lipoyl]-L-lysyl-[protein] + 2-oxoglutarate + H(+) = N(6)-[(R)-S(8)-succinyldihydrolipoyl]-L-lysyl-[protein] + CO2. E1 component of the 2-oxoglutarate dehydrogenase (OGDH) complex which catalyzes the decarboxylation of 2-oxoglutarate, the first step in the conversion of 2-oxoglutarate to succinyl-CoA and CO(2). The sequence is that of 2-oxoglutarate dehydrogenase E1 component from Brucella melitensis biotype 2 (strain ATCC 23457).